The sequence spans 107 residues: Flagellar hook-basal body complex protein FliE (107 aa).

It belongs to the FliE family.

It is found in the bacterial flagellum basal body. The polypeptide is Flagellar hook-basal body complex protein FliE (Mesorhizobium japonicum (strain LMG 29417 / CECT 9101 / MAFF 303099) (Mesorhizobium loti (strain MAFF 303099))).